Reading from the N-terminus, the 230-residue chain is Potassium/proton antiporter CemA (230 aa).

Helical transmembrane passes span 7–27, 107–127, 145–165, and 181–201; these read LPSL…SSSF, ILHF…FFLG, LNDS…VGFH, and FGWA…PVIL.

This sequence belongs to the CemA family.

The protein resides in the plastid. The protein localises to the chloroplast inner membrane. It carries out the reaction K(+)(in) + H(+)(out) = K(+)(out) + H(+)(in). In terms of biological role, contributes to K(+)/H(+) antiport activity by supporting proton efflux to control proton extrusion and homeostasis in chloroplasts in a light-dependent manner to modulate photosynthesis. Prevents excessive induction of non-photochemical quenching (NPQ) under continuous-light conditions. Indirectly promotes efficient inorganic carbon uptake into chloroplasts. This is Potassium/proton antiporter CemA from Triticum aestivum (Wheat).